We begin with the raw amino-acid sequence, 345 residues long: Phosphoribosylformylglycinamidine cyclo-ligase (345 aa).

Belongs to the AIR synthase family.

The protein resides in the cytoplasm. The catalysed reaction is 2-formamido-N(1)-(5-O-phospho-beta-D-ribosyl)acetamidine + ATP = 5-amino-1-(5-phospho-beta-D-ribosyl)imidazole + ADP + phosphate + H(+). The protein operates within purine metabolism; IMP biosynthesis via de novo pathway; 5-amino-1-(5-phospho-D-ribosyl)imidazole from N(2)-formyl-N(1)-(5-phospho-D-ribosyl)glycinamide: step 2/2. This is Phosphoribosylformylglycinamidine cyclo-ligase from Escherichia coli (strain SE11).